Consider the following 271-residue polypeptide: Undecaprenyl-diphosphatase 2 (271 aa).

A run of 8 helical transmembrane segments spans residues 1–21, 46–66, 88–108, 111–131, 146–166, 190–210, 220–240, and 251–271; these read MNFFQAIILAIAQGVSELFPI, NFLEFVVMMHIGTTISLIVYF, ALIVIGTIPAIILGAIFEQTI, AFSDVIVASIFLIFNGLLLFF, LKGWQALVIGCFQSLALIPGF, SMLLSTPMVAGAATLEIPKLI, LSLIGGIVAGLAAFLSIYILM, and MLPFAIYCIVIGIGVLASKAI.

This sequence belongs to the UppP family.

The protein localises to the cell membrane. It catalyses the reaction di-trans,octa-cis-undecaprenyl diphosphate + H2O = di-trans,octa-cis-undecaprenyl phosphate + phosphate + H(+). Functionally, catalyzes the dephosphorylation of undecaprenyl diphosphate (UPP). Confers resistance to bacitracin. This chain is Undecaprenyl-diphosphatase 2, found in Oenococcus oeni (strain ATCC BAA-331 / PSU-1).